The chain runs to 1526 residues: High affinity cGMP-specific 3',5'-cyclic phosphodiesterase 9A (1526 aa).

Over residues 1-43 (MYQDSGCSSSSSRRGSSSAAAATSTAATAAETAAAAAATTTSS) the composition is skewed to low complexity. Disordered stretches follow at residues 1–48 (MYQD…DEET), 266–348 (SSRS…SGTA), and 393–476 (RHHH…ASDC). Basic and acidic residues-rich tracts occupy residues 270 to 282 (RSSE…HEQD) and 305 to 314 (EHPSEKPERT). 2 stretches are compositionally biased toward low complexity: residues 324–348 (IAVT…SGTA) and 401–440 (QQHQ…ATAT). Positions 441–462 (PSVEQPATSGTTNIHLQPTSLP) are enriched in polar residues. One can recognise a PDEase domain in the interval 664-985 (VKRRFLEICD…EYYRRLNDAQ (322 aa)). Catalysis depends on H740, which acts as the Proton donor. Residue 740–744 (HNFRH) participates in 3',5'-cyclic GMP binding. Zn(2+)-binding residues include H744, H780, D781, and D890. Positions 781 and 890 each coordinate 3',5'-cyclic GMP. Residue D781 participates in Mg(2+) binding. Disordered regions lie at residues 986-1170 (TKTR…SSGG), 1265-1284 (TEAD…KKIP), 1314-1351 (SNGS…GSSW), 1372-1406 (RFGS…DGLG), and 1469-1496 (RYSS…LTTG). A compositionally biased stretch (low complexity) spans 993-1005 (ADSNTSATSDSNS). Positions 1033-1057 (NSQGSGGGGGGGGGGGAGGGTGSGC) are enriched in gly residues. Positions 1065 to 1093 (VSPQMPRSGSGISVKSRRSIPSQKSASRT) are enriched in polar residues. Basic and acidic residues predominate over residues 1125 to 1136 (VAEKTSKFKVDT). Residues 1139–1148 (SSNRSKSSHS) are compositionally biased toward low complexity. Over residues 1314 to 1324 (SNGSTRSSASS) the composition is skewed to low complexity. Gly residues predominate over residues 1325-1340 (GRGGSGVPGGSGGSGM). Low complexity-rich tracts occupy residues 1341–1350 (PGPSAGSGSS) and 1375–1397 (STRS…NANG). Residues 1470-1486 (YSSNDSSRHPSNNTLQS) show a composition bias toward polar residues.

The protein belongs to the cyclic nucleotide phosphodiesterase family. PDE9 subfamily. Zn(2+) is required as a cofactor. Mg(2+) serves as cofactor. As to expression, expressed in Malpighian tubules and adult fly head.

It carries out the reaction 3',5'-cyclic GMP + H2O = GMP + H(+). It participates in purine metabolism; 3',5'-cyclic GMP degradation; GMP from 3',5'-cyclic GMP: step 1/1. Specifically hydrolyzes the second messenger cGMP, which is a key regulator of many important physiological processes. Highly specific: compared to other members of the cyclic nucleotide phosphodiesterase family, has the highest affinity and selectivity for cGMP. This is High affinity cGMP-specific 3',5'-cyclic phosphodiesterase 9A from Drosophila melanogaster (Fruit fly).